Reading from the N-terminus, the 504-residue chain is Sodium/proline symporter (504 aa).

13 consecutive transmembrane segments (helical) span residues 8-28 (LITFTIYIFGMLLIGVLAYYY), 50-70 (SAGASDMSGWLLMGLPGAVYL), 73-93 (LVEGWIAIGLTIGAYFNWLLV), 127-147 (LVSATIILVFLTIYCASGVVA), 163-183 (ALWYGAAATIAYTFIGGFLAV), 189-209 (IQATLMIFALILTPVFVLLSF), 240-260 (LGLLSLAAWGLGYFGQPHILA), 281-301 (WMVLCLAGAIGIGLFAIPYFF), 324-344 (LLFNPWIAGILLSAILAAVMS), 374-394 (ELVWLGRIMVLVIAALAIWIA), 405-425 (VEFAWAGFGSAFGPVVLFSLF), 434-454 (AMAGMLVGAVTVFAWKEVVPA), and 461-481 (VYEMIPGFAFASLAIIVISLL).

The protein belongs to the sodium:solute symporter (SSF) (TC 2.A.21) family.

The protein localises to the cell inner membrane. It carries out the reaction L-proline(in) + Na(+)(in) = L-proline(out) + Na(+)(out). Its function is as follows. Catalyzes the sodium-dependent uptake of extracellular L-proline. This chain is Sodium/proline symporter (putP), found in Haemophilus influenzae (strain ATCC 51907 / DSM 11121 / KW20 / Rd).